The primary structure comprises 201 residues: MSGKSLLLKVILLGDGGVGKSSLMNRYVTNKFDSQAFHTIGVEFLNRDLEVDGRFVTLQIWDTAGQERFKSLRTPFYRGADCCLLTFSVDDRQSFENLGNWQKEFIYYADVKDPEHFPFVVLGNKVDKEDRQVTTEEAQTWCMENGDYPYLETSAKDDTNVTVAFEEAVRQVLAVEEQLEHCMLGHTIDLNSGSKAGSSCC.

Positions 18, 19, 20, 21, 22, 33, 34, 36, 38, and 39 each coordinate GTP. S21 contributes to the Mg(2+) binding site. The Switch 1 motif lies at 31 to 42; the sequence is KFDSQAFHTIGV. S34 carries the phosphoserine modification. Mg(2+) contacts are provided by T39 and D62. The Switch 2 motif lies at 64-78; sequence AGQERFKSLRTPFYR. GTP-binding residues include G65, N124, K125, A155, and K156. 2 S-geranylgeranyl cysteine lipidation sites follow: C200 and C201.

It belongs to the small GTPase superfamily. Rab family. In terms of assembly, interacts (GTP-bound form) with SGSM1; the GDP-bound form has much lower affinity for SGSM1. The GTP-bound form but not the GDP-bound form interacts with HPS4 and the BLOC-3 complex (heterodimer of HPS1 and HPS4) but does not interact with HPS1 alone. Interacts (GTP-bound form) with NDE1. Mg(2+) serves as cofactor. Ubiquitous.

Its subcellular location is the cell membrane. The protein resides in the cytoplasmic vesicle. The protein localises to the phagosome. It localises to the phagosome membrane. It catalyses the reaction GTP + H2O = GDP + phosphate + H(+). With respect to regulation, regulated by guanine nucleotide exchange factors (GEFs) which promote the exchange of bound GDP for free GTP. Regulated by GTPase activating proteins (GAPs) which increase the GTP hydrolysis activity. Inhibited by GDP dissociation inhibitors (GDIs). In terms of biological role, the small GTPases Rab are key regulators of intracellular membrane trafficking, from the formation of transport vesicles to their fusion with membranes. Rabs cycle between an inactive GDP-bound form and an active GTP-bound form that is able to recruit to membranes different sets of downstream effectors directly responsible for vesicle formation, movement, tethering and fusion. RAB9B is involved in the transport of proteins between the endosomes and the trans Golgi network. May use NDE1/NDEL1 as an effector to interact with the dynein motor complex in order to control retrograde trafficking of RAB9-associated late endosomes to the TGN. In Homo sapiens (Human), this protein is Ras-related protein Rab-9B.